The chain runs to 182 residues: Meiotically up-regulated gene 82 protein (182 aa).

Residues 161–182 (EKRLSEKKYKQKKKTQRRITMD) are disordered. Residues 169 to 182 (YKQKKKTQRRITMD) are compositionally biased toward basic residues.

Belongs to the prokaryotic/mitochondrial release factor family.

The protein resides in the mitochondrion. In terms of biological role, has a role in meiosis. This Schizosaccharomyces pombe (strain 972 / ATCC 24843) (Fission yeast) protein is Meiotically up-regulated gene 82 protein (mug82).